Reading from the N-terminus, the 98-residue chain is NADH-ubiquinone oxidoreductase chain 4L (98 aa).

The next 3 membrane-spanning stretches (helical) occupy residues 2–22 (PSIFINIILAFIIALLGMLIF), 37–57 (MLSMFILSTLTILSLHLTMSF), and 61–81 (ILLLVFAACEAAVGLALLVTV).

It belongs to the complex I subunit 4L family. Core subunit of respiratory chain NADH dehydrogenase (Complex I) which is composed of 45 different subunits.

The protein resides in the mitochondrion inner membrane. The catalysed reaction is a ubiquinone + NADH + 5 H(+)(in) = a ubiquinol + NAD(+) + 4 H(+)(out). In terms of biological role, core subunit of the mitochondrial membrane respiratory chain NADH dehydrogenase (Complex I) which catalyzes electron transfer from NADH through the respiratory chain, using ubiquinone as an electron acceptor. Part of the enzyme membrane arm which is embedded in the lipid bilayer and involved in proton translocation. This Varecia rubra (Red ruffed lemur) protein is NADH-ubiquinone oxidoreductase chain 4L (MT-ND4L).